Reading from the N-terminus, the 905-residue chain is Translation initiation factor IF-2 (905 aa).

Disordered regions lie at residues 52 to 84 (QSHG…SKSV), 116 to 230 (AKKR…QKKT), and 269 to 318 (FEKE…FEKP). Residues 65-84 (KSKTTSTARVTGSSGKSKSV) show a composition bias toward polar residues. Residues 116 to 138 (AKKRAEEEAKKREQVKKEAEERQ) are compositionally biased toward basic and acidic residues. Over residues 165–178 (VVVKKGSKAAAAAK) the composition is skewed to low complexity. Basic and acidic residues-rich tracts occupy residues 190–230 (PKVE…QKKT) and 269–278 (FEKERREIKR). The tr-type G domain occupies 406-575 (TRPPVVTIMG…NLQAELMELE (170 aa)). The tract at residues 415–422 (GHVDHGKT) is G1. 415 to 422 (GHVDHGKT) lines the GTP pocket. A G2 region spans residues 440–444 (GITQH). The interval 461–464 (DTPG) is G3. GTP contacts are provided by residues 461–465 (DTPGH) and 515–518 (NKMD). The G4 stretch occupies residues 515–518 (NKMD). The segment at 551 to 553 (SAK) is G5.

Belongs to the TRAFAC class translation factor GTPase superfamily. Classic translation factor GTPase family. IF-2 subfamily.

It is found in the cytoplasm. Functionally, one of the essential components for the initiation of protein synthesis. Protects formylmethionyl-tRNA from spontaneous hydrolysis and promotes its binding to the 30S ribosomal subunits. Also involved in the hydrolysis of GTP during the formation of the 70S ribosomal complex. This chain is Translation initiation factor IF-2, found in Psychrobacter sp. (strain PRwf-1).